The chain runs to 309 residues: Putative ankyrin repeat protein R603 (309 aa).

7 ANK repeats span residues 53–82 (QVNG…MNPE), 83–112 (NKSQ…DVSL), 114–144 (DHFA…DVTS), 145–176 (NNNL…DIHA), 177–206 (DEYF…DVNM), 214–243 (NVLS…DISF), and 245–274 (DDND…DISF).

This chain is Putative ankyrin repeat protein R603, found in Acanthamoeba polyphaga (Amoeba).